We begin with the raw amino-acid sequence, 118 residues long: Small ribosomal subunit protein uS13 (118 aa).

The disordered stretch occupies residues glycine 94–lysine 118.

The protein belongs to the universal ribosomal protein uS13 family. Part of the 30S ribosomal subunit. Forms a loose heterodimer with protein S19. Forms two bridges to the 50S subunit in the 70S ribosome.

Located at the top of the head of the 30S subunit, it contacts several helices of the 16S rRNA. In the 70S ribosome it contacts the 23S rRNA (bridge B1a) and protein L5 of the 50S subunit (bridge B1b), connecting the 2 subunits; these bridges are implicated in subunit movement. Contacts the tRNAs in the A and P-sites. The protein is Small ribosomal subunit protein uS13 of Histophilus somni (strain 129Pt) (Haemophilus somnus).